A 602-amino-acid chain; its full sequence is Elongation factor 4 (602 aa).

A tr-type G domain is found at 7–189; that stretch reads KHIRNFSIVA…AIVDKIPSPQ (183 aa). GTP is bound by residues 19–24 and 136–139; these read DHGKST and NKID.

It belongs to the TRAFAC class translation factor GTPase superfamily. Classic translation factor GTPase family. LepA subfamily.

The protein resides in the cell membrane. The catalysed reaction is GTP + H2O = GDP + phosphate + H(+). Functionally, required for accurate and efficient protein synthesis under certain stress conditions. May act as a fidelity factor of the translation reaction, by catalyzing a one-codon backward translocation of tRNAs on improperly translocated ribosomes. Back-translocation proceeds from a post-translocation (POST) complex to a pre-translocation (PRE) complex, thus giving elongation factor G a second chance to translocate the tRNAs correctly. Binds to ribosomes in a GTP-dependent manner. The sequence is that of Elongation factor 4 from Clostridium kluyveri (strain ATCC 8527 / DSM 555 / NBRC 12016 / NCIMB 10680 / K1).